A 340-amino-acid chain; its full sequence is Ketol-acid reductoisomerase (NADP(+)) (340 aa).

A KARI N-terminal Rossmann domain is found at 1-182; sequence MRVYYDRDCD…GGGRSGIIET (182 aa). NADP(+) contacts are provided by residues 24 to 27, arginine 48, serine 51, serine 53, and 83 to 86; these read YGSQ and DELQ. Histidine 108 is an active-site residue. An NADP(+)-binding site is contributed by glycine 134. Residues 183 to 329 enclose the KARI C-terminal knotted domain; the sequence is NFREECETDL…AKLREMMPWI (147 aa). Aspartate 191, glutamate 195, glutamate 227, and glutamate 231 together coordinate Mg(2+). Residue serine 252 coordinates substrate.

It belongs to the ketol-acid reductoisomerase family. Requires Mg(2+) as cofactor.

The enzyme catalyses (2R)-2,3-dihydroxy-3-methylbutanoate + NADP(+) = (2S)-2-acetolactate + NADPH + H(+). It carries out the reaction (2R,3R)-2,3-dihydroxy-3-methylpentanoate + NADP(+) = (S)-2-ethyl-2-hydroxy-3-oxobutanoate + NADPH + H(+). It functions in the pathway amino-acid biosynthesis; L-isoleucine biosynthesis; L-isoleucine from 2-oxobutanoate: step 2/4. It participates in amino-acid biosynthesis; L-valine biosynthesis; L-valine from pyruvate: step 2/4. Involved in the biosynthesis of branched-chain amino acids (BCAA). Catalyzes an alkyl-migration followed by a ketol-acid reduction of (S)-2-acetolactate (S2AL) to yield (R)-2,3-dihydroxy-isovalerate. In the isomerase reaction, S2AL is rearranged via a Mg-dependent methyl migration to produce 3-hydroxy-3-methyl-2-ketobutyrate (HMKB). In the reductase reaction, this 2-ketoacid undergoes a metal-dependent reduction by NADPH to yield (R)-2,3-dihydroxy-isovalerate. In Ruegeria sp. (strain TM1040) (Silicibacter sp.), this protein is Ketol-acid reductoisomerase (NADP(+)).